A 97-amino-acid polypeptide reads, in one-letter code: Large ribosomal subunit protein uL23 (97 aa).

Belongs to the universal ribosomal protein uL23 family. In terms of assembly, part of the 50S ribosomal subunit. Contacts protein L29, and trigger factor when it is bound to the ribosome.

In terms of biological role, one of the early assembly proteins it binds 23S rRNA. One of the proteins that surrounds the polypeptide exit tunnel on the outside of the ribosome. Forms the main docking site for trigger factor binding to the ribosome. The protein is Large ribosomal subunit protein uL23 of Limosilactobacillus fermentum (strain NBRC 3956 / LMG 18251) (Lactobacillus fermentum).